The following is a 49-amino-acid chain: GSCIESGKSCTHSRSMKNGLCCPKSRCNCRQIQHRHDYLGKRKYSCRCS.

Cystine bridges form between cysteine 3/cysteine 22, cysteine 10/cysteine 27, cysteine 21/cysteine 48, and cysteine 29/cysteine 46.

As to expression, expressed by the venom gland.

The protein resides in the secreted. Its function is as follows. Potent and selective blocker of N-type voltage-gated calcium channels (Cav2.2/CACNA1B). Also blocks vertebrate Cav2.1/CACNA1A (P/Q-type) and Cav1.2/CACNA1C (L-type) channels at very high concentration (2 micromolar). The polypeptide is Omega-segestritoxin-Sf1a (Segestria florentina (Tube-web spider)).